Consider the following 295-residue polypeptide: Protoheme IX farnesyltransferase 2 (295 aa).

9 consecutive transmembrane segments (helical) span residues 9-29 (ITKP…FFLA), 36-56 (FALF…GCVF), 83-103 (LPLA…LLYV), 108-128 (LSAF…SLWL), 135-155 (GTLV…CAVS), 163-183 (VTLL…IAIF), 209-229 (IVLY…GGYA), 230-250 (GLGY…MAWG), and 264-284 (VFGF…VDSQ).

Belongs to the UbiA prenyltransferase family. Protoheme IX farnesyltransferase subfamily.

The protein resides in the cell inner membrane. It carries out the reaction heme b + (2E,6E)-farnesyl diphosphate + H2O = Fe(II)-heme o + diphosphate. It functions in the pathway porphyrin-containing compound metabolism; heme O biosynthesis; heme O from protoheme: step 1/1. In terms of biological role, converts heme B (protoheme IX) to heme O by substitution of the vinyl group on carbon 2 of heme B porphyrin ring with a hydroxyethyl farnesyl side group. The protein is Protoheme IX farnesyltransferase 2 of Pseudomonas putida (strain ATCC 47054 / DSM 6125 / CFBP 8728 / NCIMB 11950 / KT2440).